Consider the following 399-residue polypeptide: Homocysteine-responsive endoplasmic reticulum-resident ubiquitin-like domain member 2 protein (399 aa).

The Ubiquitin-like domain occupies 10-89 (VTLVIKAPNQ…HMVHLVCASR (80 aa)). Disordered regions lie at residues 88–144 (SRTP…SIRH) and 211–250 (ASNQSPSNGENAQPVPRPVINSESPPPNPPRAPPNVAPEM). Residues 95–106 (PKASTSNKSMGT) show a composition bias toward polar residues. Over residues 107-124 (ASISRSSSEHSGSASPAS) the composition is skewed to low complexity. The segment covering 211–221 (ASNQSPSNGEN) has biased composition (polar residues). A compositionally biased stretch (pro residues) spans 234–246 (SPPPNPPRAPPNV). Residues 299–319 (FVMVMGAMILVYMHQAGWFPL) traverse the membrane as a helical segment.

It localises to the membrane. Its function is as follows. Could be involved in the unfolded protein response (UPR) pathway. The protein is Homocysteine-responsive endoplasmic reticulum-resident ubiquitin-like domain member 2 protein (herpud2) of Xenopus tropicalis (Western clawed frog).